Reading from the N-terminus, the 367-residue chain is Apolipoprotein A-V (367 aa).

An N-terminal signal peptide occupies residues 1–20 (MVAVLTWALALLSAFATVQT). Ser56 is modified (phosphoserine). Positions 71-90 (LGPLSGQGREPPGLPHDPEG) are disordered.

This sequence belongs to the apolipoprotein A1/A4/E family. As to quaternary structure, interacts with GPIHBP1. Interacts with SORL1; this interaction leads to APOA5 internalization and sorting either to lysosomes and degradation, or to the trans-Golgi network. In terms of processing, phosphorylated by FAM20C in the extracellular medium.

The protein resides in the secreted. It is found in the early endosome. The protein localises to the late endosome. It localises to the golgi apparatus. Its subcellular location is the trans-Golgi network. In terms of biological role, minor apolipoprotein mainly associated with HDL and to a lesser extent with VLDL. May also be associated with chylomicrons. Important determinant of plasma triglyceride (TG) levels by both being a potent stimulator of apo-CII lipoprotein lipase (LPL) TG hydrolysis and an inhibitor of the hepatic VLDL-TG production rate (without affecting the VLDL-apoB production rate). Activates poorly lecithin:cholesterol acyltransferase (LCAT) and does not enhance efflux of cholesterol from macrophages. Binds heparin. In Leptonychotes weddellii (Weddell seal), this protein is Apolipoprotein A-V (APOA5).